Reading from the N-terminus, the 90-residue chain is Large ribosomal subunit protein bL31 (90 aa).

Residues 71-90 are disordered; the sequence is KVKKFPSNADNQKEPAEEQE. Residues 81–90 show a composition bias toward basic and acidic residues; it reads NQKEPAEEQE.

This sequence belongs to the bacterial ribosomal protein bL31 family. Type A subfamily. As to quaternary structure, part of the 50S ribosomal subunit.

Functionally, binds the 23S rRNA. The chain is Large ribosomal subunit protein bL31 (rpmE) from Aster yellows witches'-broom phytoplasma (strain AYWB).